The following is a 217-amino-acid chain: Ras-related protein RABA2c (217 aa).

GTP-binding positions include 19–27, 38–44, 67–71, 125–128, and 155–157; these read GDSGVGKSN, CLESKST, DTAGQ, NKSD, and SAL. An Effector region motif is present at residues 41 to 49; it reads SKSTIGVEF. The interval 195-217 is disordered; the sequence is PGQGTTINVDDTSGGAKRACCSS. S-geranylgeranyl cysteine attachment occurs at residues Cys-214 and Cys-215.

It belongs to the small GTPase superfamily. Rab family. As to expression, expressed in root tips.

The protein localises to the endosome membrane. The protein resides in the golgi apparatus. It localises to the trans-Golgi network membrane. Functionally, intracellular vesicle trafficking and protein transport. The chain is Ras-related protein RABA2c (RABA2C) from Arabidopsis thaliana (Mouse-ear cress).